The following is a 96-amino-acid chain: Neutrophil defensin 8 (96 aa).

Residues 1–19 form the signal peptide; it reads MRTLVILAAILLVALQAQA. Residues 20-66 constitute a propeptide that is removed on maturation; that stretch reads EPLQARTDEATAAQEQIPTDNPEVVVSLAWDESLAPKDSVPGLRKNM. 3 cysteine pairs are disulfide-bonded: Cys68-Cys96, Cys70-Cys85, and Cys75-Cys95.

The protein belongs to the alpha-defensin family.

It is found in the secreted. Probable antibiotic and antifungal activity. This is Neutrophil defensin 8 from Macaca mulatta (Rhesus macaque).